A 60-amino-acid chain; its full sequence is Large ribosomal subunit protein bL32 (60 aa).

The tract at residues 1-60 is disordered; the sequence is MAVQQNKKSRSARDMRRSHDALSENALSVEKTTGEVHLRHHVSPEGVYRGRKVVDKGADE. The span at 11 to 22 shows a compositional bias: basic and acidic residues; the sequence is SARDMRRSHDAL.

It belongs to the bacterial ribosomal protein bL32 family.

In Pseudomonas putida (strain ATCC 700007 / DSM 6899 / JCM 31910 / BCRC 17059 / LMG 24140 / F1), this protein is Large ribosomal subunit protein bL32.